The following is a 246-amino-acid chain: Anionic trypsin-2 (246 aa).

Residues 1–15 (MSALLILALVGAAVA) form the signal peptide. Residues 16-23 (FPVDDDDK) constitute a propeptide, activation peptide. One can recognise a Peptidase S1 domain in the interval 24-244 (IVGGYTCRES…YVDWIQNTIA (221 aa)). 6 disulfide bridges follow: C30–C160, C48–C64, C132–C233, C139–C206, C171–C185, and C196–C220. Catalysis depends on H63, which acts as the Charge relay system. E75, N77, V80, and E85 together coordinate Ca(2+). The Charge relay system role is filled by D107. The Charge relay system role is filled by S200.

The protein belongs to the peptidase S1 family. Requires Ca(2+) as cofactor. Expressed in the pancreas, lung and kidney.

It is found in the secreted. It localises to the extracellular space. The enzyme catalyses Preferential cleavage: Arg-|-Xaa, Lys-|-Xaa.. This is Anionic trypsin-2 (Prss2) from Mus musculus (Mouse).